A 949-amino-acid chain; its full sequence is MTKSLSDLLQTNDFTRRHIGPSEAEQAEMLGVLGVSSLDELTQTTLPAAIQFDGELHTGPGMTEAQALAELKAVAQKNKVFRSYIGMGYAGTDVPPVILRNMLENPGWYTAYTPYQAEISQGRLEMLLNFQQTVQDMTGMPVSNASLLDEATAAAEAMTLAKRQSKNKGSNVFFVADNVHPQTMDVVKTRAEYFGFEVQTGSADAIPEGAFGALVQYPGTHGEVLNLAPIAEKAHTQGAALIVATDLLACALLTPPGEQGADIVVGSAQRFGVPMGFGGPHAAFLACQKGFERSMPGRVIGVSKDVRGNTALRMAMQTREQHIRREKATSNICTAQALLANMAAAYAVWHGPEGIKTIAERVHRLTGILAKALQDAGIKANETFFDTLTFEGQDDLGARAEAKGINFRLDGGKVGISLDETVTPQDLADIIEVVTGKGVDVQKLDAEAVDGIPAPLKRQSDFLTHPVFNTHHSEHGMLRYLKQLENKDYSLTHGMIPLGSCTMKLNATTEMIPVTWPEFGGLHPFAPESQTQGYAEMLAELERWLADITGYDAVSMQPNSGAQGEYAGLLVIRKYHEARGEAHRNICLIPASAHGTNPASAAMMGMQVVVVKTDEQGNIDFDDLKAQAEAHSDHLAALMITYPSTHGVYEENVRDVCDLIHQHGGQVYLDGANMNAMVGVAKPGLIGGDVSHLNLHKTFAIPHGGGGPGMGPIGVKAHLAPFLPNHAVAPTSDSHTGAVSAAPYGSASILPISYLYIKLLGAAGLRQSTQVALLNANYIAKRLSGAFPVLYSGKGGRVAHECILDIRPLKQESGVSEEDIAKRLMDYGFHAPTMSFPVPGTLMIEPTESEPKAELDRFVDAMLNIRREIQDVQDGTISAADSPLKHAPHTLKDLMDSEWTRAYSRETGAFPSAAQKAWKYWPAVNRVDNVYGDRNFVCSCPPIEDYIGA.

At Lys697 the chain carries N6-(pyridoxal phosphate)lysine.

Belongs to the GcvP family. The glycine cleavage system is composed of four proteins: P, T, L and H. It depends on pyridoxal 5'-phosphate as a cofactor.

It catalyses the reaction N(6)-[(R)-lipoyl]-L-lysyl-[glycine-cleavage complex H protein] + glycine + H(+) = N(6)-[(R)-S(8)-aminomethyldihydrolipoyl]-L-lysyl-[glycine-cleavage complex H protein] + CO2. Its function is as follows. The glycine cleavage system catalyzes the degradation of glycine. The P protein binds the alpha-amino group of glycine through its pyridoxal phosphate cofactor; CO(2) is released and the remaining methylamine moiety is then transferred to the lipoamide cofactor of the H protein. The chain is Glycine dehydrogenase (decarboxylating) from Deinococcus radiodurans (strain ATCC 13939 / DSM 20539 / JCM 16871 / CCUG 27074 / LMG 4051 / NBRC 15346 / NCIMB 9279 / VKM B-1422 / R1).